Reading from the N-terminus, the 103-residue chain is Large ribosomal subunit protein bL21 (103 aa).

This sequence belongs to the bacterial ribosomal protein bL21 family. Part of the 50S ribosomal subunit. Contacts protein L20.

Its function is as follows. This protein binds to 23S rRNA in the presence of protein L20. This chain is Large ribosomal subunit protein bL21, found in Acetivibrio thermocellus (strain ATCC 27405 / DSM 1237 / JCM 9322 / NBRC 103400 / NCIMB 10682 / NRRL B-4536 / VPI 7372) (Clostridium thermocellum).